The primary structure comprises 332 residues: 2-hydroxyacid dehydrogenase homolog 2 (332 aa).

Residues 154–155, 233–235, and D259 each bind NAD(+); these read KI and TSR. R235 is a catalytic residue. Residue E264 is part of the active site. The active-site Proton donor is the H296. 296-299 provides a ligand contact to NAD(+); sequence HQAF.

Belongs to the D-isomer specific 2-hydroxyacid dehydrogenase family.

It localises to the cytoplasm. Its subcellular location is the nucleus. This is 2-hydroxyacid dehydrogenase homolog 2 from Schizosaccharomyces pombe (strain 972 / ATCC 24843) (Fission yeast).